Reading from the N-terminus, the 500-residue chain is MATIAFSRLSIYFCVLLLCHGSMAQLFGPNVNPWHNPRQGGFRECRFDRLQAFEPLRRVRSEAGVTEYFDEKNEQFQCTGTFVIRRVIEPQGLLVPRYSNTPGMVYIIQGRGSMGLTFPGCPATYQQQFQQFLPEGQSQSQKFRDEHQKIHQFRQGDIVALPAGVAHWFYNEGDAPVVALYVFDLNNNANQLEPRQKEFLLAGNNNREQQMYGRSIEQHSGQNIFSGFNNELLSEALGVNALVAKRLQGQNDQRGEIIRVKNGLKLLRPAFAQQQEQAQQQEQAQAQYQVQYSEEQQPSTRCNGLDENFCTIKARLNIENPSHADTYNPRAGRITRLNSQKFPILNLVQLSATRVNLYQNAILSPFWNVNAHSLVYIVQGHARVQVVSNLGKTVFNGVLRPGQLLIIPQHYVVLKKAEHEGCQYISFKTNANSMVSHLAGKNSIFRAMPVDVIANAYRISREQARSLKNNRGEELGAFTPRYQQQTYPGFSNESENEALE.

An N-terminal signal peptide occupies residues 1–24; that stretch reads MATIAFSRLSIYFCVLLLCHGSMA. 2 disulfide bridges follow: C45–C78 and C121–C310. Cupin type-1 domains follow at residues 50 to 245 and 316 to 465; these read LQAF…LVAK and LNIE…EQAR. The segment covering 481–493 has biased composition (polar residues); sequence RYQQQTYPGFSNE. The segment at 481–500 is disordered; that stretch reads RYQQQTYPGFSNESENEALE.

Belongs to the 11S seed storage protein (globulins) family. Hexamer; each subunit is composed of an acidic and a basic chain derived from a single precursor and linked by a disulfide bond. In terms of tissue distribution, expressed in endosperm (at protein level).

In terms of biological role, seed storage protein. In Oryza sativa subsp. japonica (Rice), this protein is Glutelin type-B 4 (GLUB4).